The primary structure comprises 243 residues: Small ribosomal subunit protein uS2c (243 aa).

The segment at 224–243 (GNNGKVSSDQEDTQELQTVQ) is disordered.

The protein belongs to the universal ribosomal protein uS2 family.

The protein localises to the plastid. The protein resides in the chloroplast. The chain is Small ribosomal subunit protein uS2c (rps2) from Rhodomonas salina (Cryptomonas salina).